The sequence spans 82 residues: RNA-binding protein GTNG_0100 (82 aa).

Belongs to the eukaryotic ribosomal protein eL8 family.

The protein is RNA-binding protein GTNG_0100 of Geobacillus thermodenitrificans (strain NG80-2).